The chain runs to 304 residues: Phosphoribosylaminoimidazole-succinocarboxamide synthase (304 aa).

It belongs to the SAICAR synthetase family.

The catalysed reaction is 5-amino-1-(5-phospho-D-ribosyl)imidazole-4-carboxylate + L-aspartate + ATP = (2S)-2-[5-amino-1-(5-phospho-beta-D-ribosyl)imidazole-4-carboxamido]succinate + ADP + phosphate + 2 H(+). It participates in purine metabolism; IMP biosynthesis via de novo pathway; 5-amino-1-(5-phospho-D-ribosyl)imidazole-4-carboxamide from 5-amino-1-(5-phospho-D-ribosyl)imidazole-4-carboxylate: step 1/2. In Corynebacterium efficiens (strain DSM 44549 / YS-314 / AJ 12310 / JCM 11189 / NBRC 100395), this protein is Phosphoribosylaminoimidazole-succinocarboxamide synthase.